The sequence spans 452 residues: Pup--protein ligase (452 aa).

Mg(2+) is bound at residue glutamate 9. Arginine 53 is an ATP binding site. Tyrosine 55 serves as a coordination point for Mg(2+). Aspartate 57 functions as the Proton acceptor in the catalytic mechanism. Glutamate 63 is a Mg(2+) binding site. The ATP site is built by threonine 66 and tryptophan 419.

This sequence belongs to the Pup ligase/Pup deamidase family. Pup-conjugating enzyme subfamily.

It carries out the reaction ATP + [prokaryotic ubiquitin-like protein]-L-glutamate + [protein]-L-lysine = ADP + phosphate + N(6)-([prokaryotic ubiquitin-like protein]-gamma-L-glutamyl)-[protein]-L-lysine.. It participates in protein degradation; proteasomal Pup-dependent pathway. Its pathway is protein modification; protein pupylation. In terms of biological role, catalyzes the covalent attachment of the prokaryotic ubiquitin-like protein modifier Pup to the proteasomal substrate proteins, thereby targeting them for proteasomal degradation. This tagging system is termed pupylation. The ligation reaction involves the side-chain carboxylate of the C-terminal glutamate of Pup and the side-chain amino group of a substrate lysine. The chain is Pup--protein ligase from Mycolicibacterium vanbaalenii (strain DSM 7251 / JCM 13017 / BCRC 16820 / KCTC 9966 / NRRL B-24157 / PYR-1) (Mycobacterium vanbaalenii).